The following is a 70-amino-acid chain: NAD(P)H-quinone oxidoreductase subunit O (70 aa).

The protein belongs to the complex I NdhO subunit family. NDH-1 can be composed of about 15 different subunits; different subcomplexes with different compositions have been identified which probably have different functions.

The protein localises to the cellular thylakoid membrane. It carries out the reaction a plastoquinone + NADH + (n+1) H(+)(in) = a plastoquinol + NAD(+) + n H(+)(out). The enzyme catalyses a plastoquinone + NADPH + (n+1) H(+)(in) = a plastoquinol + NADP(+) + n H(+)(out). NDH-1 shuttles electrons from an unknown electron donor, via FMN and iron-sulfur (Fe-S) centers, to quinones in the respiratory and/or the photosynthetic chain. The immediate electron acceptor for the enzyme in this species is believed to be plastoquinone. Couples the redox reaction to proton translocation, and thus conserves the redox energy in a proton gradient. Cyanobacterial NDH-1 also plays a role in inorganic carbon-concentration. The protein is NAD(P)H-quinone oxidoreductase subunit O of Nostoc sp. (strain PCC 7120 / SAG 25.82 / UTEX 2576).